A 120-amino-acid chain; its full sequence is NAD(P)H-quinone oxidoreductase subunit 3, chloroplastic (120 aa).

3 consecutive transmembrane segments (helical) span residues 9 to 29 (IFWA…LISG), 64 to 84 (MFAL…PWAM), and 88 to 108 (VLGV…IVGL).

This sequence belongs to the complex I subunit 3 family. NDH is composed of at least 16 different subunits, 5 of which are encoded in the nucleus.

The protein localises to the plastid. Its subcellular location is the chloroplast thylakoid membrane. The enzyme catalyses a plastoquinone + NADH + (n+1) H(+)(in) = a plastoquinol + NAD(+) + n H(+)(out). It carries out the reaction a plastoquinone + NADPH + (n+1) H(+)(in) = a plastoquinol + NADP(+) + n H(+)(out). NDH shuttles electrons from NAD(P)H:plastoquinone, via FMN and iron-sulfur (Fe-S) centers, to quinones in the photosynthetic chain and possibly in a chloroplast respiratory chain. The immediate electron acceptor for the enzyme in this species is believed to be plastoquinone. Couples the redox reaction to proton translocation, and thus conserves the redox energy in a proton gradient. This Populus alba (White poplar) protein is NAD(P)H-quinone oxidoreductase subunit 3, chloroplastic.